We begin with the raw amino-acid sequence, 655 residues long: p-hydroxybenzoic acid efflux pump subunit AaeB (655 aa).

11 helical membrane-spanning segments follow: residues 13-33 (FAVK…HFQL), 38-58 (WAVL…GGEP), 69-89 (LRII…ISMI), 93-113 (LLMI…SSLV), 121-141 (WGLS…EPLL), 152-172 (EIVI…PRSI), 370-390 (LFWL…IAVV), 407-427 (FIYG…VIIP), 431-451 (QSML…GIEV), 459-479 (MGAL…TFHF), and 482-502 (FLDS…VILL).

The protein belongs to the aromatic acid exporter ArAE (TC 2.A.85) family.

The protein localises to the cell inner membrane. Its function is as follows. Forms an efflux pump with AaeA. Could function as a metabolic relief valve, allowing to eliminate certain compounds when they accumulate to high levels in the cell. The chain is p-hydroxybenzoic acid efflux pump subunit AaeB from Salmonella dublin (strain CT_02021853).